We begin with the raw amino-acid sequence, 654 residues long: Acetyl-coenzyme A synthetase (654 aa).

Residues 193–196 (RRGK) and threonine 313 each bind CoA. ATP contacts are provided by residues 389 to 391 (GEP), 413 to 418 (DTWWQT), aspartate 506, and arginine 521. Position 529 (serine 529) interacts with CoA. Arginine 532 contacts ATP. Mg(2+) is bound by residues histidine 545 and valine 548. An N6-acetyllysine modification is found at lysine 619.

The protein belongs to the ATP-dependent AMP-binding enzyme family. Mg(2+) is required as a cofactor. Acetylated. Deacetylation by the SIR2-homolog deacetylase activates the enzyme.

The enzyme catalyses acetate + ATP + CoA = acetyl-CoA + AMP + diphosphate. Its function is as follows. Catalyzes the conversion of acetate into acetyl-CoA (AcCoA), an essential intermediate at the junction of anabolic and catabolic pathways. AcsA undergoes a two-step reaction. In the first half reaction, AcsA combines acetate with ATP to form acetyl-adenylate (AcAMP) intermediate. In the second half reaction, it can then transfer the acetyl group from AcAMP to the sulfhydryl group of CoA, forming the product AcCoA. The sequence is that of Acetyl-coenzyme A synthetase from Wolinella succinogenes (strain ATCC 29543 / DSM 1740 / CCUG 13145 / JCM 31913 / LMG 7466 / NCTC 11488 / FDC 602W) (Vibrio succinogenes).